The following is a 267-amino-acid chain: Fibroin light chain (267 aa).

The N-terminal stretch at 1-16 (MLPFVLVLLVATSALA) is a signal peptide. S19 bears the N-acetylserine; in short form mark. A disulfide bridge links C103 with C162.

As to quaternary structure, silk fibroin elementary unit consists in a disulfide-linked heavy and light chain and a p25 glycoprotein in molar ratios of 6:6:1. This results in a complex of approximately 2.3 MDa. Partially N-terminally processed to yield a short form which lacks the first two residues of the long form. Post-translationally, the interchain disulfide bridge is essential for the intracellular transport and secretion of fibroin. As to expression, produced exclusively in the posterior (PSG) section of silk glands, which are essentially modified salivary glands.

Its subcellular location is the secreted. It is likely that the major role of L-chain is to prevent the retention of H-chain in ER by forming the disulfide linkage. This chain is Fibroin light chain (FIBL), found in Galleria mellonella (Greater wax moth).